A 123-amino-acid polypeptide reads, in one-letter code: MAQGEIVPRPSPFDGLPENCISNIISFTTPRDACFAASVSKAFESAVQSDSVWEKFLPLDYSSLVPESRVFLSKKELCFSLCRVPLLIEGGKKSFWLDKTSGEKCIMLSPKGMVISWVNSPQF.

The region spanning Pro-10–Phe-56 is the F-box domain.

This is F-box protein PP2-B3 (PP2B3) from Arabidopsis thaliana (Mouse-ear cress).